A 232-amino-acid chain; its full sequence is Ribosomal RNA large subunit methyltransferase E (232 aa).

S-adenosyl-L-methionine is bound by residues G64, W66, D97, D113, and D138. K178 acts as the Proton acceptor in catalysis.

Belongs to the class I-like SAM-binding methyltransferase superfamily. RNA methyltransferase RlmE family.

Its subcellular location is the cytoplasm. The catalysed reaction is uridine(2552) in 23S rRNA + S-adenosyl-L-methionine = 2'-O-methyluridine(2552) in 23S rRNA + S-adenosyl-L-homocysteine + H(+). Functionally, specifically methylates the uridine in position 2552 of 23S rRNA at the 2'-O position of the ribose in the fully assembled 50S ribosomal subunit. The sequence is that of Ribosomal RNA large subunit methyltransferase E from Leptothrix cholodnii (strain ATCC 51168 / LMG 8142 / SP-6) (Leptothrix discophora (strain SP-6)).